Consider the following 318-residue polypeptide: Chlorophyllase-2 (318 aa).

The short motif at 136 to 140 (GHSRG) is the GXSXG element. Ser138 functions as the Nucleophile in the catalytic mechanism. Catalysis depends on charge relay system residues Asp167 and His244.

This sequence belongs to the AB hydrolase superfamily. Lipase family. As to expression, expressed in leaves, flowers and flower buds, but not in roots.

The protein localises to the cytoplasm. The protein resides in the cytosol. The catalysed reaction is a chlorophyll + H2O = a chlorophyllide + phytol + H(+). It carries out the reaction chlorophyll a + H2O = phytol + chlorophyllide a + H(+). It functions in the pathway porphyrin-containing compound metabolism; chlorophyll degradation. Its function is as follows. Catalyzes the hydrolysis of ester bond in chlorophyll to yield chlorophyllide and phytol. Does not seem to be required for chlorophyll degradation during senescence. This Arabidopsis thaliana (Mouse-ear cress) protein is Chlorophyllase-2.